A 1721-amino-acid chain; its full sequence is Intersectin-1 (1721 aa).

The 89-residue stretch at 21–109 (ERAKHDQQFH…PVMKQQPVAI (89 aa)) folds into the EH 1 domain. The region spanning 53 to 88 (LPQPVLAQIWALADMNNDGRMDQVEFSIAMKLIKLK) is the EF-hand 1 domain. Ca(2+)-binding residues include D66, N68, D70, R72, and E77. The residue at position 203 (S203) is a Phosphoserine. An EH 2 domain is found at 221–310 (SRLKYRQLFN…PEYIPPSFRR (90 aa)). One can recognise an EF-hand 2 domain in the interval 254–289 (LPQAQLASIWNLSDIDQDGKLTAEEFILAMHLIDVA). Ca(2+) contacts are provided by D267, D269, D271, K273, and E278. S318 is modified (phosphoserine). Disordered regions lie at residues 322-348 (STSVDQRLPEEPVLEDEQQQLEKKLPV) and 650-701 (QRRA…KQEA). Residues 326-702 (DQRLPEEPVL…GEEKGKQEAQ (377 aa)) are KLERQ. The stretch at 355-659 (RENFERGNLE…QRRAQERDKQ (305 aa)) forms a coiled coil. S687 carries the phosphoserine modification. The region spanning 740-806 (VKVVYYRALY…PANYAEKIPE (67 aa)) is the SH3 1 domain. Positions 836–868 (LAVTSSEPSTTPNNWADFSSTWPTSTNEKPETD) are disordered. Positions 838 to 862 (VTSSEPSTTPNNWADFSSTWPTSTN) are enriched in polar residues. Residue T897 is modified to Phosphothreonine. Phosphoserine occurs at positions 901, 902, and 904. Residues 913–971 (VEGLQAQALYPWRAKKDNHLNFNKNDVITVLEQQDMWWFGEVQGQKGWFPKSYVKLISG) form the SH3 2 domain. A phosphoserine mark is found at S978, S986, and S995. 2 consecutive SH3 domains span residues 1002 to 1060 (VSGE…LKDS) and 1074 to 1138 (KKPE…LLSP). The interval 1074 to 1138 (KKPEIAQVIA…PANYVKLLSP (65 aa)) is required for interaction with FCHSD2. Residues 1104–1127 (RKKNPGGWWEGELQARGKKRQIGW) carry the Bipartite nuclear localization signal; in isoform 2 motif. S1137 is modified (phosphoserine). At T1144 the chain carries Phosphothreonine. The SH3 5 domain maps to 1155–1214 (AAVCQVIGMYDYTAQNDDELAFNKGQIINVLNKEDPDWWKGEVNGQVGLFPSNYVKLTTD). A DH domain is found at 1237–1423 (KRQGYIHELI…EELCSQVNEG (187 aa)). A PH domain is found at 1462–1571 (KFLHSGKLYK…WVQKIKAASE (110 aa)). The C2 domain maps to 1579-1695 (KKREKAYLVR…KKDQGSKGPV (117 aa)). A Phosphoserine modification is found at S1645. Ca(2+) contacts are provided by D1667, S1670, and D1673.

Interacts (via DH domain) with CDC42. Interacts (via SH3 domain 1) with WASL. Interacts with dynamin, SNAP25 and SNAP23. Interacts with clathrin-associated proteins and other components of the endocytic machinery, such as SPIN90, EPS15, EPN1, EPN2, STON2, FCHO1, FCHO2 and DAB2. Interacts (via SH3 domains) with REPS1 and SGIP1. Interacts with ARHGAP31. Interacts with ADAM15. Interacts with PRRT2. Interacts (via SH3 domain 4) with FCHSD2 (via SH3 domain 2). Interacts (via SH3 domain 1) with DENND2B. Interacts (via SH3 domains) with CBL. Isoform 2: Interacts with CBL and DNM1. Isoform 2: Interacts with LMNA. Isoform 2: Interacts with importin subunit KPNA1; this is likely to mediate its import into the nucleus. Interacts with DNM2. As to quaternary structure, (Microbial infection) Interacts with vaccinia virus protein A36. Ca(2+) is required as a cofactor. In terms of tissue distribution, isoform 1 is expressed almost exclusively in the brain. Isoform 2 is detected in brain, spleen, lung, liver, heart, skeletal muscle and kidney. Isoform 5 is primarily expressed in brain, spleen, lung and kidney (at protein level). Isoform 1 and isoform 2 are detected in brain. Isoform 2 is ubiquitous in adult and fetal tissues with high expression in skeletal muscle, heart, spleen, ovary, testis and all fetal tissues tested and low expression in thymus, blood, lung, liver and pancreas. Isoform 1 is expressed almost exclusively in the brain, in all brain regions. Not expressed in the spinal cord.

The protein localises to the endomembrane system. Its subcellular location is the synapse. The protein resides in the synaptosome. It is found in the cell projection. It localises to the lamellipodium. The protein localises to the cell membrane. Its subcellular location is the membrane. The protein resides in the clathrin-coated pit. It is found in the recycling endosome. It localises to the endosome. The protein localises to the cytoplasmic vesicle. Its subcellular location is the cytoplasm. The protein resides in the nucleus envelope. In terms of biological role, adapter protein that provides a link between the endocytic membrane traffic and the actin assembly machinery. Acts as a guanine nucleotide exchange factor (GEF) for CDC42, and thereby stimulates actin nucleation mediated by WASL and the ARP2/3 complex. Plays a role in the assembly and maturation of clathrin-coated vesicles. Recruits FCHSD2 to clathrin-coated pits. Involved in endocytosis of activated EGFR, and probably also other growth factor receptors. Involved in endocytosis of integrin beta-1 (ITGB1) and transferrin receptor (TFR); internalization of ITGB1 as DAB2-dependent cargo but not TFR may involve association with DAB2. Promotes ubiquitination and subsequent degradation of EGFR, and thereby contributes to the down-regulation of EGFR-dependent signaling pathways. In chromaffin cells, required for normal exocytosis of catecholamines. Required for rapid replenishment of release-ready synaptic vesicles at presynaptic active zones. Inhibits ARHGAP31 activity toward RAC1. Its function is as follows. Plays a role in synaptic vesicle endocytosis in brain neurons. The chain is Intersectin-1 from Homo sapiens (Human).